The primary structure comprises 1192 residues: MPHCGTTNSEINLNSNELISYQKKKSNEDLQKKHDKKCSINLKTSQVPDGGFNNQYTQLTANKIEQYNCNDLDKVCIVPSSRSDGMEASFSELLLSPNKLISQPWQTAEEIENWQNDSFRQRNEMFSCIYTNSMLNQQPCSQQQLLATQLLYARLLRSQLAEREFHSNKFNMVHYSGSKKTMLREDELLSTPSSQDNNNNIKLIKDIENSISCVDPPLFEFSNVHQRAEQKNKQDDKNCYSPKLKSNKEALDGYDLQHTCDFIREQKNILIDIKKKLDNLSDSSGKFRKRLSVRQSHIEVNNGSNSALEESVRRQLNGNRKSIENLLEEVKRLYNQWSSAELYYVRSLQRLGLPSEEDGEYTSTPTHTIMALAAIALSNESILPQKTNAVHSKIPDVESESDFFLTSAKPKTLVEIEDIILQLASSVNMHQSSSASTPHESYSDSVKSDCEESNSAPTCIWHSTRQTFRHKKDVEPCSTAAEIILEYASLSSSSNIETSRLLTSASNLTDVTENYNVTTQLPIVFNYNRESSAESIVTDPLLVPEFSTAPSTPSTGSNSGCSTGMVSGIFGLSQNRRKQRLARHIETLTTNSFKSNAIRGNVDNEITNQLKTSPSIRALPTENVSHLITKTLSSANASLTAQELSITNLFKERLCALQGNAGSMKTEIFPMIDAPYDLSIGSKTKHMNLEAKHTSNAQSNESKETTNDKKKPHIKKPLNAFMLYMKEMRAKVVAECTLKESAAINQILGRRWHELSREEQSKYYEKARQERQLHMELYPGWSARDNYGYVSKKKKRKKDRSTTDSGGNNMKKCRARFGLDQQSQWCKPCRRKKKCIRYMEALNGNGPAEDGSCFDEHGSQLSDDDEDDYDDDKLGGSCGSADETNKIEDEDSESLNQSMPSPGCLSGLSSLQSPSTTMSLASPLNMNANSATNVIFPASSNALLIVGADQPTAQQRPTLVSTSGSSSGSTSSISTTPNTSSTVSPVTCMTGPCLGSSQERAMMLGNRFSHLGMGLSPPVVSTSTSKSEPFFKPHPTVCNNPIFALPSIGNCSLNISSMPNTSRNPIGANPRDINNPLSINQLTKRREYKNVELIEASESKTIVAHAATSIIQHVAVNGYHANHSLLNSNLGHLHHQLNNRTENPNRSEQTMLSVSNHSVNSSECHKESDSQAIVSSNPPNAGSSDNGVISVS.

A Nuclear localization signal motif is present at residues 351–357 (LGLPSEE). Residues 691–713 (AKHTSNAQSNESKETTNDKKKPH) are disordered. The HMG box DNA-binding region spans 714 to 782 (IKKPLNAFML…LHMELYPGWS (69 aa)). 4 disordered regions span residues 790-812 (VSKK…NMKK), 847-916 (PAED…SPST), 955-986 (QRPT…VSPV), and 1136-1192 (QLNN…ISVS). Over residues 862–871 (SDDDEDDYDD) the composition is skewed to acidic residues. Low complexity-rich tracts occupy residues 898-915 (SMPS…QSPS) and 957-986 (PTLV…VSPV). Composition is skewed to polar residues over residues 1140–1162 (RTEN…VNSS) and 1170–1192 (SQAI…ISVS).

Belongs to the TCF/LEF family. In terms of assembly, binds to the beta-catenin homolog arm or to gro.

It localises to the nucleus. Its function is as follows. Segment polarity protein. Functions together with arm to transduce the Wingless (Wg) signal in embryos and in developing adult tissues. Acts as a transcriptional activator, but in the absence of arm, it binds to gro and acts as a transcriptional repressor of wg-responsive genes. The protein is Protein pangolin, isoform J of Drosophila melanogaster (Fruit fly).